Here is a 257-residue protein sequence, read N- to C-terminus: Methylthioribulose-1-phosphate dehydratase (257 aa).

The tract at residues 1-33 (MVSSQEKMASISDIIQKDEDSGSEKTESQDKEH) is disordered. The span at 15–33 (IQKDEDSGSEKTESQDKEH) shows a compositional bias: basic and acidic residues. Cys-107 lines the substrate pocket. Zn(2+) contacts are provided by His-125 and His-127. Catalysis depends on Glu-149, which acts as the Proton donor/acceptor. His-205 serves as a coordination point for Zn(2+).

Belongs to the aldolase class II family. MtnB subfamily. Zn(2+) serves as cofactor.

Its subcellular location is the cytoplasm. The catalysed reaction is 5-(methylsulfanyl)-D-ribulose 1-phosphate = 5-methylsulfanyl-2,3-dioxopentyl phosphate + H2O. The protein operates within amino-acid biosynthesis; L-methionine biosynthesis via salvage pathway; L-methionine from S-methyl-5-thio-alpha-D-ribose 1-phosphate: step 2/6. Catalyzes the dehydration of methylthioribulose-1-phosphate (MTRu-1-P) into 2,3-diketo-5-methylthiopentyl-1-phosphate (DK-MTP-1-P). Functions in the methionine salvage pathway. May play a role in apoptosis. The polypeptide is Methylthioribulose-1-phosphate dehydratase (Esox lucius (Northern pike)).